We begin with the raw amino-acid sequence, 356 residues long: L-Ala-D/L-Glu epimerase (356 aa).

161-163 (KVK) provides a ligand contact to substrate. 3 residues coordinate Mg(2+): Asp191, Glu219, and Asp244. Substrate is bound by residues Lys268 and 320–322 (DLD).

Belongs to the mandelate racemase/muconate lactonizing enzyme family. Requires Mg(2+) as cofactor.

It carries out the reaction L-alanyl-L-glutamate = L-alanyl-D-glutamate. Its function is as follows. Dipeptide epimerase with a preference for substrates containing a Glu residue in the second position. Catalyzes the epimerization of L-Ala-L-Glu, L-Ser-L-Glu, L-Thr-L-Glu, L-Val-L-Glu, L-Gly-L-Glu and L-Thr-L-Glu (in vitro). May play a role in the metabolism of the murein peptide, of which L-Ala-D-Glu is a component. The chain is L-Ala-D/L-Glu epimerase from Francisella tularensis subsp. novicida (strain U112).